Here is a 232-residue protein sequence, read N- to C-terminus: MGQKVHPNGIRLGIVKPWNATWFASSQEFADNLDGDFKVRQYLTKELKKASLSRIVIERPAKSIRVTIHTARPGVVIGKKGEDVEKLRAGVAKIAGVPAQINIAEVRKPELDGQLVADSIASQLERRVMFRRAMKRAVQNAMRLGAKGIKVEVSGRLGGAEIARSEWYREGRVPLHTLRADIDYATSSAHTQYGVIGVKVWIFKGEVLGGMPAANAVEPKADKPKKQRRSRK.

A KH type-2 domain is found at 39 to 107 (VRQYLTKELK…PAQINIAEVR (69 aa)).

Belongs to the universal ribosomal protein uS3 family. In terms of assembly, part of the 30S ribosomal subunit. Forms a tight complex with proteins S10 and S14.

In terms of biological role, binds the lower part of the 30S subunit head. Binds mRNA in the 70S ribosome, positioning it for translation. In Aliivibrio fischeri (strain MJ11) (Vibrio fischeri), this protein is Small ribosomal subunit protein uS3.